The following is an 81-amino-acid chain: Large ribosomal subunit protein bL31 (81 aa).

Residues Cys16, Cys18, Cys38, and Cys41 each contribute to the Zn(2+) site.

Belongs to the bacterial ribosomal protein bL31 family. Type A subfamily. As to quaternary structure, part of the 50S ribosomal subunit. Zn(2+) is required as a cofactor.

In terms of biological role, binds the 23S rRNA. This Mycobacterium marinum (strain ATCC BAA-535 / M) protein is Large ribosomal subunit protein bL31.